Here is a 322-residue protein sequence, read N- to C-terminus: uncharacterized protein (322 aa).

Composition is skewed to basic residues over residues 1-16 and 43-61; these read MPGNSRRRGAVRKSGT and LRPHHPAAKRARAQPRRPV. The tract at residues 1-69 is disordered; it reads MPGNSRRRGA…PVKRADETET (69 aa). Residues glycine 261, isoleucine 281, and leucine 290 each coordinate S-adenosyl-L-methionine.

The protein belongs to the class IV-like SAM-binding methyltransferase superfamily. RNA methyltransferase TrmH family.

This is an uncharacterized protein from Mycobacterium bovis (strain BCG / Pasteur 1173P2).